The primary structure comprises 426 residues: UDP-N-acetylglucosamine 1-carboxyvinyltransferase (426 aa).

22–23 (KN) is a phosphoenolpyruvate binding site. Arg-94 serves as a coordination point for UDP-N-acetyl-alpha-D-glucosamine. The active-site Proton donor is Cys-118. Cys-118 bears the 2-(S-cysteinyl)pyruvic acid O-phosphothioketal mark. Residues 123–127 (RPVDL), Asp-310, and Ile-332 each bind UDP-N-acetyl-alpha-D-glucosamine.

It belongs to the EPSP synthase family. MurA subfamily.

The protein resides in the cytoplasm. The enzyme catalyses phosphoenolpyruvate + UDP-N-acetyl-alpha-D-glucosamine = UDP-N-acetyl-3-O-(1-carboxyvinyl)-alpha-D-glucosamine + phosphate. It participates in cell wall biogenesis; peptidoglycan biosynthesis. In terms of biological role, cell wall formation. Adds enolpyruvyl to UDP-N-acetylglucosamine. This Hyphomonas neptunium (strain ATCC 15444) protein is UDP-N-acetylglucosamine 1-carboxyvinyltransferase.